We begin with the raw amino-acid sequence, 891 residues long: Translation initiation factor IF-2 (891 aa).

The tr-type G domain occupies 390–559 (NRAPIVTIMG…LLQSDMLELK (170 aa)). Residues 399-406 (GHVDHGKT) form a G1 region. A GTP-binding site is contributed by 399–406 (GHVDHGKT). Positions 424–428 (GITQS) are G2. The segment at 445 to 448 (DTPG) is G3. GTP contacts are provided by residues 445-449 (DTPGH) and 499-502 (NKID). A G4 region spans residues 499–502 (NKID). The tract at residues 535 to 537 (SAT) is G5.

The protein belongs to the TRAFAC class translation factor GTPase superfamily. Classic translation factor GTPase family. IF-2 subfamily.

The protein localises to the cytoplasm. One of the essential components for the initiation of protein synthesis. Protects formylmethionyl-tRNA from spontaneous hydrolysis and promotes its binding to the 30S ribosomal subunits. Also involved in the hydrolysis of GTP during the formation of the 70S ribosomal complex. The chain is Translation initiation factor IF-2 from Blochmanniella pennsylvanica (strain BPEN).